The sequence spans 339 residues: UDP-glucose 4-epimerase (339 aa).

NAD(+) is bound by residues 10–12, 31–35, 58–59, Phe-80, and Lys-84; these read GYI, DNLSN, and DL. Substrate is bound at residue 124–126; that stretch reads SAT. Tyr-148 serves as the catalytic Proton acceptor. NAD(+) is bound by residues Lys-152 and Tyr-176. Substrate-binding positions include 176–178, 197–199, Arg-230, and 291–294; these read YFN, NNL, and RPGD.

It belongs to the NAD(P)-dependent epimerase/dehydratase family. NAD(+) serves as cofactor.

The catalysed reaction is UDP-alpha-D-glucose = UDP-alpha-D-galactose. The enzyme catalyses UDP-N-acetyl-alpha-D-glucosamine = UDP-N-acetyl-alpha-D-galactosamine. Its pathway is cell wall biogenesis; teichoic acid biosynthesis. Its function is as follows. Catalyzes two distinct but analogous reactions: the reversible epimerization of UDP-glucose to UDP-galactose and the reversible epimerization of UDP-N-acetylglucosamine to UDP-N-acetylgalactosamine. The enzyme is more efficient in catalyzing the interconversion between unacetylated than between corresponding N-acetylated substrates. Essential for growth in media containing either glucose or galactose. May protect the cell from the toxic effects of galactose and glucose or derivatives of both sugars. Involved in the biosynthesis of teichoic acids via the formation of UDP-N-acetylgalactosamine. Influences cell division. This Bacillus subtilis (strain 168) protein is UDP-glucose 4-epimerase.